The sequence spans 356 residues: Vacuolar protein sorting-associated protein 26 (356 aa).

A disordered region spans residues 301-356 (MRRPGTEDDEEEKQTTSIPGTQKFTAPAPVEHPKPESPRSDPKSGSTSPDDNSDSS). Positions 315–324 (TTSIPGTQKF) are enriched in polar residues. The span at 331–342 (EHPKPESPRSDP) shows a compositional bias: basic and acidic residues.

It belongs to the VPS26 family.

Its function is as follows. May play a role in vesicular protein sorting, similar to the yeast retromer proteins. This chain is Vacuolar protein sorting-associated protein 26 (vps-26), found in Caenorhabditis elegans.